A 430-amino-acid chain; its full sequence is Hydrogenobyrinate a,c-diamide synthase (430 aa).

One can recognise a GATase cobBQ-type domain in the interval Arg239–Leu422. The active-site Nucleophile is the Cys321.

The protein belongs to the CobB/CbiA family. It depends on Mg(2+) as a cofactor.

The enzyme catalyses hydrogenobyrinate + 2 L-glutamine + 2 ATP + 2 H2O = hydrogenobyrinate a,c-diamide + 2 L-glutamate + 2 ADP + 2 phosphate + 2 H(+). It functions in the pathway cofactor biosynthesis; adenosylcobalamin biosynthesis; cob(II)yrinate a,c-diamide from precorrin-2 (aerobic route): step 9/10. Catalyzes the ATP-dependent amidation of the two carboxylate groups at positions a and c of hydrogenobyrinate, using either L-glutamine or ammonia as the nitrogen source. In Stutzerimonas stutzeri (strain A1501) (Pseudomonas stutzeri), this protein is Hydrogenobyrinate a,c-diamide synthase.